A 723-amino-acid polypeptide reads, in one-letter code: Cyclin-T2 (723 aa).

Residues 1–298 (MASGRGASSR…SVTGVPANPS (298 aa)) are interaction with MDFIC and MDFI. In terms of domain architecture, Cyclin N-terminal spans 12–147 (FFTREQLENT…IMLQTLGFEI (136 aa)). The interval 250–298 (RLKRIRNWRAMAKKPKVDGQVSETPLLGSSLVQNSILVDSVTGVPANPS) is interaction with POLR2A. Composition is skewed to polar residues over residues 297–307 (PSFQKPSTSTF) and 314–325 (NSGSTSVQDSRA). Disordered stretches follow at residues 297-325 (PSFQ…DSRA), 340-364 (SYSL…VYTQ), 385-428 (ALHS…GMLP), and 458-645 (AEQQ…SSVK). The span at 395–409 (DKVADHSSAKQEYTH) shows a compositional bias: basic and acidic residues. Lys-404 participates in a covalent cross-link: Glycyl lysine isopeptide (Lys-Gly) (interchain with G-Cter in SUMO2). Ser-477 carries the post-translational modification Phosphoserine. Basic and acidic residues-rich tracts occupy residues 489–503 (DRPE…ERSG), 517–543 (GPSK…EGSG), and 552–565 (ISRD…EHPA). Positions 566 to 576 (NRHHSSHKYLH) are enriched in basic residues. Position 596 is a phosphoserine (Ser-596). Residues 631–645 (SSKSAGSSSSSSSVK) are compositionally biased toward low complexity.

The protein belongs to the cyclin family. Cyclin C subfamily. As to quaternary structure, interacts with CDK9 to form P-TEFb. Interacts with POLR2A (via the C-terminal domain (CTD)); mediates transcriptional activity. Interacts with HEXIM1; mediates formation of a tripartite complex with KPNA2. Interacts with HEXIM2. Interacts with PKN1; enhances MYOD1-dependent transcription. P-TEFB complex interacts with RB1; promotes phosphorylation of RB1. P-TEFB complex interacts with MYOD1; promotes the transcriptional activity of MYOD1 through its CDK9-mediated phosphorylation. Interacts with MDFI and MDFIC. As to expression, highly expressed in all phases of skeletal muscle differentiation, particularly in later stages. Highly expressed in skeletal muscle. Significantly expressed in heart, brain, kidney, liver, testis, and pancreas.

It localises to the cytoplasm. It is found in the perinuclear region. Its subcellular location is the nucleus. Its function is as follows. Regulatory subunit of the cyclin-dependent kinase pair (CDK9/cyclin T) complex, also called positive transcription elongation factor B (P-TEFB), which is proposed to facilitate the transition from abortive to production elongation by phosphorylating the CTD (carboxy-terminal domain) of the large subunit of RNA polymerase II (RNAP II). The activity of this complex is regulated by binding with 7SK snRNA. Plays a role during muscle differentiation; P-TEFB complex interacts with MYOD1; this tripartite complex promotes the transcriptional activity of MYOD1 through its CDK9-mediated phosphorylation and binds the chromatin of promoters and enhancers of muscle-specific genes; this event correlates with hyperphosphorylation of the CTD domain of RNA pol II. In addition, enhances MYOD1-dependent transcription through interaction with PKN1. Involved in early embryo development. In Mus musculus (Mouse), this protein is Cyclin-T2.